A 729-amino-acid polypeptide reads, in one-letter code: MTEIYEQAKHSLQGEDFSSFNYLFAVNKLLSNPVSYDLGRDLIVRALDSRERFSEHTTILKNMVRKSGLFPYLKKEFTSLTPDDLRVLELYRTPFSDGYVFHSMQFHIFDLLKSGQNVVLSAPTSMGKSAIVDSLLGMGTLKRLVLVVPTVALADETRRRLQERFGDRYQIIHHSSQVCHSDQAVYVLTQERVNERDDIVDIDLFVIDEFYKLAFRQLKSGDIDHQDERVIELNIALSKLLKVSRQFYLTGPFVNSIRGLEKLGYPHTFVSTDFNTVALDVKTFGIKANDDKAKLKALGEIAHACVDATIIYCKSPTVAGLVARELIRLGHGTPTENPHVDWVSEEFDADWDYTVALRNGIGLHFGALPRALQQYTADQFNAGKLRFLLCTSTIIEGVNTIAKNVVIYDNRDGTRSIDKFTHGNIKGRAGRMGVHFVGKIFCLEEIPEDNLNQEVDIPLGIQGIDTPINLLASVQPDHLSEFSQDRFDEVFINDRVSIDLVKKHSYFRVEQFEMLQSMFEMMDDNEFSSLVFHWTPATNFLKTFAKIIARLVPHTFSRNGVPVKPTDVMIAKLAGYLSAESYSEYLKNQIDYARQWISEGEKRTLSIALNNDLKLITNTFGYTLPKVLSLMEDVVKHHAVKRGIRSKVDYTHVKLAFESFHLPPGVNALEEIGIPIQTLHRLVDLLEFSDEADVDELSQYLRDTQDIWSRSIGYVDQMFIRRALGIRRH.

The region spanning 109–271 (FDLLKSGQNV…KLGYPHTFVS (163 aa)) is the Helicase ATP-binding domain. 122 to 129 (APTSMGKS) is an ATP binding site. Positions 297–472 (ALGEIAHACV…GIDTPINLLA (176 aa)) constitute a Helicase C-terminal domain.

This sequence belongs to the helicase family. In terms of assembly, interacts with AbpB.

Functionally, part of an antiviral system composed of AbpA and AbpB; when both are expressed from a plasmid they confer resistance to phages T2, T4, T7 and lambda but not RB32 or RB69. Resistance is temperature dependent, it can be seen at 30 degrees Celsius but not at 37 or 42 degrees Celsius. The system impairs phage but not bacterial DNA synthesis (shown for T4, T7 and lambda). Partially suppressed by mutations in T4 gene 41, a replicative helicase. Deletion or mutations in this gene were selected in directed evolution experiments for resistance to intense ionizing radiation (3000 Gy). The protein is Anti-bacteriophage protein B of Escherichia coli (strain K12).